The sequence spans 161 residues: Putative 4-hydroxy-4-methyl-2-oxoglutarate aldolase (161 aa).

Substrate contacts are provided by residues 75-78 (GDNL) and arginine 97. Position 98 (aspartate 98) interacts with a divalent metal cation.

It belongs to the class II aldolase/RraA-like family. In terms of assembly, homotrimer. Requires a divalent metal cation as cofactor.

The catalysed reaction is 4-hydroxy-4-methyl-2-oxoglutarate = 2 pyruvate. The enzyme catalyses oxaloacetate + H(+) = pyruvate + CO2. Catalyzes the aldol cleavage of 4-hydroxy-4-methyl-2-oxoglutarate (HMG) into 2 molecules of pyruvate. Also contains a secondary oxaloacetate (OAA) decarboxylase activity due to the common pyruvate enolate transition state formed following C-C bond cleavage in the retro-aldol and decarboxylation reactions. In Alkalilimnicola ehrlichii (strain ATCC BAA-1101 / DSM 17681 / MLHE-1), this protein is Putative 4-hydroxy-4-methyl-2-oxoglutarate aldolase.